Reading from the N-terminus, the 312-residue chain is Calcium-independent mitochondrial carrier protein SCaMC-3L (312 aa).

Solcar repeat units lie at residues 27 to 113 (GTLW…SRNF), 121 to 206 (PSFQ…LRCL), and 217 to 304 (PSGL…MKKT). The next 6 helical transmembrane spans lie at 33 to 50 (LLSG…TAPL), 88 to 107 (GNGI…FSVF), 131 to 144 (SLAV…INPM), 182 to 200 (YLPN…LAVY), 219 to 243 (GLVS…LTLV), and 279 to 298 (GMTP…YLVY).

This sequence belongs to the mitochondrial carrier (TC 2.A.29) family. Mainly expressed in testis and at lesser levels in brain.

It is found in the mitochondrion inner membrane. It catalyses the reaction Mg(2+)(out) + phosphate(in) + ATP(out) = Mg(2+)(in) + phosphate(out) + ATP(in). The enzyme catalyses ADP(out) + phosphate(in) + H(+)(out) = ADP(in) + phosphate(out) + H(+)(in). In terms of biological role, calcium-independent ATP-Mg/Pi exchanger that catalyzes the electroneutral exchange of Mg-ATP or free ADP against an hydrogenphosphate and participates in the net transport of adenine nucleotides across the mitochondria inner membrane. This is Calcium-independent mitochondrial carrier protein SCaMC-3L from Rattus norvegicus (Rat).